The primary structure comprises 113 residues: Small ribosomal subunit protein uS17 (113 aa).

This sequence belongs to the universal ribosomal protein uS17 family. In terms of assembly, part of the 30S ribosomal subunit.

Its function is as follows. One of the primary rRNA binding proteins, it binds specifically to the 5'-end of 16S ribosomal RNA. The protein is Small ribosomal subunit protein uS17 of Sulfurisphaera tokodaii (strain DSM 16993 / JCM 10545 / NBRC 100140 / 7) (Sulfolobus tokodaii).